A 194-amino-acid chain; its full sequence is Imidazoleglycerol-phosphate dehydratase (194 aa).

Belongs to the imidazoleglycerol-phosphate dehydratase family.

It is found in the cytoplasm. The catalysed reaction is D-erythro-1-(imidazol-4-yl)glycerol 3-phosphate = 3-(imidazol-4-yl)-2-oxopropyl phosphate + H2O. The protein operates within amino-acid biosynthesis; L-histidine biosynthesis; L-histidine from 5-phospho-alpha-D-ribose 1-diphosphate: step 6/9. This is Imidazoleglycerol-phosphate dehydratase from Bacillus cereus (strain AH187).